The sequence spans 142 residues: U1 small nuclear ribonucleoprotein C (142 aa).

The Matrin-type zinc-finger motif lies at Y4–M36.

It belongs to the U1 small nuclear ribonucleoprotein C family. As to quaternary structure, U1 snRNP is composed of the 7 core Sm proteins B/B', D1, D2, D3, E, F and G that assemble in a heptameric protein ring on the Sm site of the small nuclear RNA to form the core snRNP, and at least 3 U1 snRNP-specific proteins U1-70K, U1-A and U1-C. U1-C interacts with U1 snRNA and the 5' splice-site region of the pre-mRNA.

The protein localises to the nucleus. In terms of biological role, component of the spliceosomal U1 snRNP, which is essential for recognition of the pre-mRNA 5' splice-site and the subsequent assembly of the spliceosome. U1-C is directly involved in initial 5' splice-site recognition for both constitutive and regulated alternative splicing. The interaction with the 5' splice-site seems to precede base-pairing between the pre-mRNA and the U1 snRNA. Stimulates commitment or early (E) complex formation by stabilizing the base pairing of the 5' end of the U1 snRNA and the 5' splice-site region. This chain is U1 small nuclear ribonucleoprotein C, found in Caenorhabditis elegans.